Consider the following 146-residue polypeptide: UPF0742 protein PB2B2.17c (146 aa).

Residues 38–60 form a helical membrane-spanning segment; it reads LTVKYCLAVKLLIYLLYCWYIYS.

Belongs to the UPF0742 family.

It is found in the cytoplasm. It localises to the nucleus membrane. The chain is UPF0742 protein PB2B2.17c from Schizosaccharomyces pombe (strain 972 / ATCC 24843) (Fission yeast).